Here is a 459-residue protein sequence, read N- to C-terminus: UDP-N-acetylmuramoyl-tripeptide--D-alanyl-D-alanine ligase (459 aa).

Residue 121 to 127 (GSSGKTT) participates in ATP binding.

The protein belongs to the MurCDEF family. MurF subfamily.

Its subcellular location is the cytoplasm. The catalysed reaction is D-alanyl-D-alanine + UDP-N-acetyl-alpha-D-muramoyl-L-alanyl-gamma-D-glutamyl-meso-2,6-diaminopimelate + ATP = UDP-N-acetyl-alpha-D-muramoyl-L-alanyl-gamma-D-glutamyl-meso-2,6-diaminopimeloyl-D-alanyl-D-alanine + ADP + phosphate + H(+). It functions in the pathway cell wall biogenesis; peptidoglycan biosynthesis. Its function is as follows. Involved in cell wall formation. Catalyzes the final step in the synthesis of UDP-N-acetylmuramoyl-pentapeptide, the precursor of murein. The sequence is that of UDP-N-acetylmuramoyl-tripeptide--D-alanyl-D-alanine ligase from Treponema pallidum (strain Nichols).